The following is a 335-amino-acid chain: Probable UDP-N-acetylglucosamine pyrophosphorylase (335 aa).

The Substrate binding signature appears at 45-48 (LSGG). UTP is bound by residues 45-48 (LSGG), lysine 59, glutamine 120, and glycine 145. Asparagine 146 is a binding site for substrate. Aspartate 170 provides a ligand contact to UTP. Positions 218–219 (EY) match the Substrate binding motif. Residue lysine 278 participates in UTP binding. Lysine 308 serves as a coordination point for substrate.

This sequence belongs to the UDPGP type 1 family.

It is found in the cytoplasm. It catalyses the reaction N-acetyl-alpha-D-glucosamine 1-phosphate + UTP + H(+) = UDP-N-acetyl-alpha-D-glucosamine + diphosphate. It functions in the pathway nucleotide-sugar biosynthesis; UDP-N-acetyl-alpha-D-glucosamine biosynthesis; UDP-N-acetyl-alpha-D-glucosamine from N-acetyl-alpha-D-glucosamine 1-phosphate: step 1/1. This is Probable UDP-N-acetylglucosamine pyrophosphorylase (UAP1) from Encephalitozoon cuniculi (strain GB-M1) (Microsporidian parasite).